Here is a 338-residue protein sequence, read N- to C-terminus: Formamidase (338 aa).

The CN hydrolase domain occupies 15–257 (VVIGLAQLAL…DEIVCCELRP (243 aa)). The Proton acceptor role is filled by Glu-61. Lys-130 serves as the catalytic Proton donor. The Nucleophile role is filled by Cys-163.

Belongs to the carbon-nitrogen hydrolase superfamily. Aliphatic amidase family.

The catalysed reaction is formamide + H2O = formate + NH4(+). In terms of biological role, is an aliphatic amidase with a restricted substrate specificity, as it only hydrolyzes formamide. In Pseudomonas syringae pv. tomato (strain ATCC BAA-871 / DC3000), this protein is Formamidase.